The following is a 279-amino-acid chain: 2'-N-acetylparomamine deacetylase (279 aa).

The Zn(2+) site is built by H31, D34, and H157. Residues 245–279 (PRRWTGGTAGAGHAAGRRGAPHTERVWTPAPAGAR) form a disordered region. Positions 246–258 (RRWTGGTAGAGHA) are enriched in low complexity.

Belongs to the PIGL family. The cofactor is Zn(2+).

The catalysed reaction is 2'-N-acetylparomamine + H2O = paromamine + acetate. It carries out the reaction 2'''-acetyl-6'''-hydroxyneomycin C + H2O = 6'''-deamino-6'''-hydroxyneomycin C + acetate. Its pathway is antibiotic biosynthesis; neomycin biosynthesis. Deacetylase involved in the biosynthesis of neomycin by mediating 2 steps of the pathway. Deacetylates both 2'-N-acetylparomamine and 2'''-acetyl-6'''-hydroxyneomycin C. In Streptomyces fradiae (Streptomyces roseoflavus), this protein is 2'-N-acetylparomamine deacetylase (neoL).